We begin with the raw amino-acid sequence, 313 residues long: Zinc transporter ZitB (313 aa).

At 1 to 20 (MAHSHSHTSSHLPEDNNARR) the chain is on the cytoplasmic side. The helical transmembrane segment at 21–41 (LLYAFGVTAGFMLVEVVGGFL) threads the bilayer. Topologically, residues 42 to 47 (SGSLAL) are periplasmic. A helical transmembrane segment spans residues 48-68 (LADAGHMLTDTAALLFALLAV). Residues 69–89 (QFSRRPPTIRHTFGWLRLTTL) are Cytoplasmic-facing. The chain crosses the membrane as a helical span at residues 90 to 110 (AAFVNAIALVVITILIVWEAI). The Periplasmic portion of the chain corresponds to 111–121 (ERFRTPRPVEG). The chain crosses the membrane as a helical span at residues 122-142 (GMMMAIAVAGLLANILSFWLL). The Cytoplasmic portion of the chain corresponds to 143 to 159 (HHGSEEKNLNVRAAALH). The chain crosses the membrane as a helical span at residues 160 to 180 (VLGDLLGSVGAIIAALIIIWT). A topological domain (periplasmic) is located at residue Gly181. Residues 182–202 (WTPADPILSILVSLLVLRSAW) form a helical membrane-spanning segment. Topologically, residues 203-313 (RLLKDSVNEL…GVSGHSHHHH (111 aa)) are cytoplasmic.

Belongs to the cation diffusion facilitator (CDF) transporter (TC 2.A.4) family. SLC30A subfamily.

The protein resides in the cell inner membrane. In terms of biological role, involved in zinc efflux across the cytoplasmic membrane, thus reducing zinc accumulation in the cytoplasm and rendering bacteria more resistant to zinc. It may contribute to zinc homeostasis at low concentrations of zinc. The polypeptide is Zinc transporter ZitB (zitB) (Shigella flexneri).